The following is a 203-amino-acid chain: Small ribosomal subunit protein uS4 (203 aa).

An S4 RNA-binding domain is found at 93–153 (RRLDNIVYRL…DKSKNLQQVK (61 aa)).

Belongs to the universal ribosomal protein uS4 family. In terms of assembly, part of the 30S ribosomal subunit. Contacts protein S5. The interaction surface between S4 and S5 is involved in control of translational fidelity.

In terms of biological role, one of the primary rRNA binding proteins, it binds directly to 16S rRNA where it nucleates assembly of the body of the 30S subunit. With S5 and S12 plays an important role in translational accuracy. The chain is Small ribosomal subunit protein uS4 from Lactobacillus gasseri (strain ATCC 33323 / DSM 20243 / BCRC 14619 / CIP 102991 / JCM 1131 / KCTC 3163 / NCIMB 11718 / NCTC 13722 / AM63).